A 1451-amino-acid chain; its full sequence is MGMFVLLLYTFLYAGDLGHGAEKSFPVLNIAVILGRTRYITERDIRSLWTRDMSLDFDVNVVTLLVNQTDPKSIITHVCDLMSGTKIHGVVFGDDTDQEAIAQILDFVSSQTFIPILGIHGGSSMIMADKDEMSTFFQFGASIKQQATVMLNIMEEYDWHVFSVITSNFPGYRDFISFIKTTVDNSFVGWEVQNYITLDTSYTDAQTLTQLKKIHSSVILLYCSKDEATYIFEEARSLGLMGYGFVWIVPSLVTGNTDIIPYEFPSGLVSVSYDDWDYGIEARVRDGLGIITTAASAMLEKHSVIPEAKTSCYGQNERNDPPLHTLHNFMINVTWDGKDLSFTEDGYQANPKLVVLLLNMEREWEKVGKWENKSLNMKYPVWPRITASLDSDHDDNHLSIVTLEEAPFVIVENIDYLTGTCVRNTVPCRKYFRLNNSTTEGTSVKKCCKGFCIDILKKLSKTVKFTYDLYLVTNGKHGKKIKNVWNGMIGEVVYKRAVMAVGSLTINEERSVAVDFSVPFVETGISVMVSRSNGTVSPSAFLEPFSASVWVMMFVMLLLVSAMAVFIFEYFSPVGYNRNLAQGKDPHGPSFTIGKAVWLLWGLVFNNSVPVQNPKGTTSKIIVSIWAFFAVIFLASYTANLAAFMIQEEFVDQVTGLSDNKFQRPHDYSPPFRFGTVPNGSTERNIRNNYPDMHQYMVKFHQKGVQDALVSLKTGKLDAFIYDAAVLNYMAGRDEGCKLVTIGSGYIFATTGYGIALQKGSRWKRPIDLALLQFVGDGEMEELEKLWLTGICHTEKNEVMSSQLDIDNMAGVFYMLAAAMALSLITFVWEHLFYWKLRFCFTGVCTGTPGLLFSISRGIYSCIHGVHIEEKKKSPDFSFTASQTNMLKLLRASKNIANLSNLNQSQCNSPKRTSDYIQRNSLLTDMVLDKGNLTYSDNRPFQQKDIYSENTYDLAMLSANCPKDNLNNYVFQGQHPLTLNESNPNTVEVAVSAEAKVNTRPRQLWKKSVETLRQTQGSVNENGTEESKSSIKNQRFLPEDGHFSDVSEASSRATCHIDSENNNKHRKSKDNLKKRPVSAKYARECSEVELSYLKIKHGPNRDKVYTIDGDKEPSFIMDQPKYSENSPDQDDEDYPDVYQDHNDNYRKTEPLQSDRTPLHSEGRLPNNDIQYKLFSKHYNLKEKNTSMSDANDRHRQNSTHCRSCLSNMPNYTGHYTARSPYKCDDCLHTGKLYDIDEDQMLHEAANSMHSEDFYEHNWLENNALHFQKKNKLRINRQHSCDNINKPREHDLGRPPRSLSLKEKERYIQENPFAKFVIVPPEKLLGNNASLFTDSLKDSKRSKSLYPDNSSDNPFLHSYQETQKLSHGRSSSDIYKQSSLPKARNDNYLRSSIKSTTSYSSRDGRVPDDMCVSEYALPYVTSNNSVYSAPRVVNSCSNRRVFKKMPSLESDV.

The first 20 residues, 1–20, serve as a signal peptide directing secretion; it reads MGMFVLLLYTFLYAGDLGHG. Residues 21 to 547 lie on the Extracellular side of the membrane; the sequence is AEKSFPVLNI…PSAFLEPFSA (527 aa). The N-linked (GlcNAc...) asparagine glycan is linked to N67. A disulfide bridge connects residues C79 and C312. Residues H120, D258, and D274 each contribute to the Zn(2+) site. N332, N372, N435, and N436 each carry an N-linked (GlcNAc...) asparagine glycan. Disulfide bonds link C421–C447 and C428–C448. 3 residues coordinate L-glutamate: S503, T505, and R510. A glycan (N-linked (GlcNAc...) asparagine) is linked at N533. Residues 548–568 form a helical membrane-spanning segment; the sequence is SVWVMMFVMLLLVSAMAVFIF. Topologically, residues 569 to 592 are cytoplasmic; it reads EYFSPVGYNRNLAQGKDPHGPSFT. The segment at 591-612 is pore-forming; sequence FTIGKAVWLLWGLVFNNSVPVQ. The segment at residues 593–612 is an intramembrane region (discontinuously helical); sequence IGKAVWLLWGLVFNNSVPVQ. At 613-617 the chain is on the cytoplasmic side; it reads NPKGT. The chain crosses the membrane as a helical span at residues 618–637; sequence TSKIIVSIWAFFAVIFLASY. Residues 638-808 lie on the Extracellular side of the membrane; the sequence is TANLAAFMIQ…VMSSQLDIDN (171 aa). N-linked (GlcNAc...) asparagine glycosylation occurs at N679. S681, T682, and D723 together coordinate L-glutamate. Residues C737 and C792 are joined by a disulfide bond. Residues 809-829 form a helical membrane-spanning segment; sequence MAGVFYMLAAAMALSLITFVW. The Cytoplasmic portion of the chain corresponds to 830–1451; that stretch reads EHLFYWKLRF…KKMPSLESDV (622 aa). Residues 1011–1022 show a composition bias toward polar residues; it reads TLRQTQGSVNEN. Disordered regions lie at residues 1011–1080 and 1100–1165; these read TLRQ…VSAK and NRDK…GRLP. 3 stretches are compositionally biased toward basic and acidic residues: residues 1055-1073, 1100-1113, and 1138-1149; these read CHID…DNLK, NRDK…DKEP, and YQDHNDNYRKTE.

This sequence belongs to the glutamate-gated ion channel (TC 1.A.10.1) family. Heterotetramer. Forms heterotetrameric channels composed of two GluN1/zeta subunits (GRIN1), and two identical GluN2/epsilon subunits (GRIN2A, GRIN2B, GRIN2C or GRIN2D) or GluN3 subunits (GRIN3A or GRIN3B) (in vitro). In vivo, the subunit composition may depend on the expression levels of the different subunits.

The protein localises to the cell membrane. Its subcellular location is the postsynaptic cell membrane. The enzyme catalyses Ca(2+)(in) = Ca(2+)(out). It catalyses the reaction Na(+)(in) = Na(+)(out). It carries out the reaction K(+)(in) = K(+)(out). Component of N-methyl-D-aspartate (NMDA) receptors (NMDARs) that function as heterotetrameric, ligand-gated cation channels with high calcium permeability and voltage-dependent block by Mg(2+). MDARs participate in synaptic plasticity. Channel activation requires binding of the neurotransmitter L-glutamate to the GluN2 subunit, glycine binding to the GluN1 subunit, plus membrane depolarization to eliminate channel inhibition by Mg(2+). NMDARs mediate simultaneously the potasium efflux and the influx of calcium and sodium. Each GluN2 subunit confers differential attributes to channel properties, including activation, deactivation and desensitization kinetics, pH sensitivity, Ca2(+) permeability, and binding to allosteric modulators. Plays a role in dendritic branching in brain neurons and in synaptic plasticity. This is Glutamate receptor ionotropic, NMDA 2A from Xenopus laevis (African clawed frog).